Consider the following 435-residue polypeptide: Gamma-glutamyl phosphate reductase (435 aa).

This sequence belongs to the gamma-glutamyl phosphate reductase family.

It localises to the cytoplasm. The enzyme catalyses L-glutamate 5-semialdehyde + phosphate + NADP(+) = L-glutamyl 5-phosphate + NADPH + H(+). The protein operates within amino-acid biosynthesis; L-proline biosynthesis; L-glutamate 5-semialdehyde from L-glutamate: step 2/2. In terms of biological role, catalyzes the NADPH-dependent reduction of L-glutamate 5-phosphate into L-glutamate 5-semialdehyde and phosphate. The product spontaneously undergoes cyclization to form 1-pyrroline-5-carboxylate. The chain is Gamma-glutamyl phosphate reductase from Aquifex aeolicus (strain VF5).